Here is a 557-residue protein sequence, read N- to C-terminus: Selenoprotein N (557 aa).

Positions 1–21 (MAADVDKTPAGEQKDDHEDRG) are enriched in basic and acidic residues. The tract at residues 1–28 (MAADVDKTPAGEQKDDHEDRGTPSSRRG) is disordered. A helical membrane pass occupies residues 35-55 (ISSLFIIAAIPVIGVCIKYYL). A non-standard amino acid (selenocysteine) is located at residue Sec-430. Asn-451 and Asn-499 each carry an N-linked (GlcNAc...) asparagine glycan.

In terms of assembly, interacts with ryr3.

It is found in the endoplasmic reticulum membrane. Functionally, plays an important role in cell protection against oxidative stress and in the regulation of redox-related calcium homeostasis. Regulates the calcium level of the ER by protecting the calcium pump ATP2A2 against the oxidoreductase ERO1A-mediated oxidative damage. Acts as a modulator of ryanodine receptor (RyR) activity: protects RyR from oxidation due to increased oxidative stress, or directly controls the RyR redox state, regulating the RyR-mediated calcium mobilization required for normal muscle development and differentiation. Plays an important role in muscle development and differentiation during early development. Required for development of the slow muscle fiber lineage. Required for the correct organization and attachment of the myofibrils, as well as for the continuity and integrity of the connective tissue that forms the myoseptum. This is Selenoprotein N from Danio rerio (Zebrafish).